The following is a 119-amino-acid chain: Ribonuclease P protein component (119 aa).

It belongs to the RnpA family. Consists of a catalytic RNA component (M1 or rnpB) and a protein subunit.

It catalyses the reaction Endonucleolytic cleavage of RNA, removing 5'-extranucleotides from tRNA precursor.. Its function is as follows. RNaseP catalyzes the removal of the 5'-leader sequence from pre-tRNA to produce the mature 5'-terminus. It can also cleave other RNA substrates such as 4.5S RNA. The protein component plays an auxiliary but essential role in vivo by binding to the 5'-leader sequence and broadening the substrate specificity of the ribozyme. The polypeptide is Ribonuclease P protein component (Streptococcus equi subsp. zooepidemicus (strain MGCS10565)).